The chain runs to 1055 residues: Putative helicase/primase complex protein (1055 aa).

It belongs to the asfivirus F1055L family.

In terms of biological role, may be involved in DNA replication. In Ornithodoros (relapsing fever ticks), this protein is Putative helicase/primase complex protein.